Reading from the N-terminus, the 318-residue chain is 2-keto-3-deoxygluconate permease (318 aa).

10 helical membrane passes run Leu10–Pro30, Gly42–Ile62, Ile82–Pro102, Leu109–Leu129, Ala139–Gly159, Leu163–Ala183, Phe194–Leu214, Ala224–Ala244, Val257–Ala277, and Ala289–Tyr309.

This sequence belongs to the KdgT transporter family.

It localises to the cell inner membrane. It catalyses the reaction 2-dehydro-3-deoxy-D-gluconate(in) + H(+)(in) = 2-dehydro-3-deoxy-D-gluconate(out) + H(+)(out). Its function is as follows. Catalyzes the proton-dependent uptake of 2-keto-3-deoxygluconate (KDG) into the cell. The sequence is that of 2-keto-3-deoxygluconate permease from Xanthomonas euvesicatoria pv. vesicatoria (strain 85-10) (Xanthomonas campestris pv. vesicatoria).